Reading from the N-terminus, the 477-residue chain is Chaperonin GroEL 2 (477 aa).

ATP contacts are provided by residues 29–32, 86–90, and glycine 416; these read TLGP and DGTTT.

The protein belongs to the chaperonin (HSP60) family. Forms a cylinder of 14 subunits composed of two heptameric rings stacked back-to-back. Interacts with the co-chaperonin GroES.

The protein resides in the cytoplasm. The catalysed reaction is ATP + H2O + a folded polypeptide = ADP + phosphate + an unfolded polypeptide.. Together with its co-chaperonin GroES, plays an essential role in assisting protein folding. The GroEL-GroES system forms a nano-cage that allows encapsulation of the non-native substrate proteins and provides a physical environment optimized to promote and accelerate protein folding. The chain is Chaperonin GroEL 2 from Streptomyces lividans.